Reading from the N-terminus, the 136-residue chain is Protein NrdI (136 aa).

Belongs to the NrdI family.

Functionally, probably involved in ribonucleotide reductase function. The chain is Protein NrdI from Klebsiella pneumoniae subsp. pneumoniae (strain ATCC 700721 / MGH 78578).